Consider the following 351-residue polypeptide: S-adenosylmethionine:tRNA ribosyltransferase-isomerase (351 aa).

Belongs to the QueA family. In terms of assembly, monomer.

The protein localises to the cytoplasm. It carries out the reaction 7-aminomethyl-7-carbaguanosine(34) in tRNA + S-adenosyl-L-methionine = epoxyqueuosine(34) in tRNA + adenine + L-methionine + 2 H(+). It functions in the pathway tRNA modification; tRNA-queuosine biosynthesis. Functionally, transfers and isomerizes the ribose moiety from AdoMet to the 7-aminomethyl group of 7-deazaguanine (preQ1-tRNA) to give epoxyqueuosine (oQ-tRNA). In Idiomarina loihiensis (strain ATCC BAA-735 / DSM 15497 / L2-TR), this protein is S-adenosylmethionine:tRNA ribosyltransferase-isomerase.